The chain runs to 54 residues: Conotoxin mr5.4b (54 aa).

The N-terminal stretch at 1-14 (ILLLLIASAPSVDA) is a signal peptide. Positions 15-40 (QLKTKDDVPLASFHANVKRTLQKLLN) are excised as a propeptide. Glu52 is subject to 4-carboxyglutamate.

The protein belongs to the conotoxin T superfamily. Post-translationally, contains 2 disulfide bonds that can be either 'C1-C3, C2-C4' or 'C1-C4, C2-C3', since these disulfide connectivities have been observed for conotoxins with cysteine framework V (for examples, see AC P0DQQ7 and AC P81755). As to expression, expressed by the venom duct.

It localises to the secreted. The chain is Conotoxin mr5.4b from Conus marmoreus (Marble cone).